A 166-amino-acid polypeptide reads, in one-letter code: Eukaryotic translation initiation factor 5A (166 aa).

The disordered stretch occupies residues methionine 1–tyrosine 21. Lysine 53 carries the hypusine modification. Residues glutamate 101 to aspartate 121 are disordered. Residues methionine 112–aspartate 121 show a composition bias toward acidic residues.

The protein belongs to the eIF-5A family. Lys-53 undergoes hypusination, a unique post-translational modification that consists in the addition of a butylamino group from spermidine to lysine side chain, leading to the formation of the unusual amino acid hypusine. eIF-5As are the only known proteins to undergo this modification, which is essential for their function.

It localises to the cytoplasm. In terms of biological role, translation factor that promotes translation elongation and termination, particularly upon ribosome stalling at specific amino acid sequence contexts. Binds between the exit (E) and peptidyl (P) site of the ribosome and promotes rescue of stalled ribosome: specifically required for efficient translation of polyproline-containing peptides as well as other motifs that stall the ribosome. Acts as a ribosome quality control (RQC) cofactor by joining the RQC complex to facilitate peptidyl transfer during CAT tailing step. The protein is Eukaryotic translation initiation factor 5A of Leishmania donovani.